The primary structure comprises 172 residues: dCTP deaminase, dUMP-forming (172 aa).

DCTP contacts are provided by residues Arg93 to Arg98, Asp111, Thr119 to Glu121, Gln138, and Tyr151. Catalysis depends on Glu121, which acts as the Proton donor/acceptor.

Belongs to the dCTP deaminase family. In terms of assembly, homotrimer.

The catalysed reaction is dCTP + 2 H2O = dUMP + NH4(+) + diphosphate. It participates in pyrimidine metabolism; dUMP biosynthesis; dUMP from dCTP: step 1/1. Its function is as follows. Bifunctional enzyme that catalyzes both the deamination of dCTP to dUTP and the hydrolysis of dUTP to dUMP without releasing the toxic dUTP intermediate. The sequence is that of dCTP deaminase, dUMP-forming from Hathewaya histolytica (Clostridium histolyticum).